We begin with the raw amino-acid sequence, 997 residues long: Kinesin-like protein KIF19 (997 aa).

The 336-residue stretch at 11-346 (QLMVALRVRP…LTYAGRAKNI (336 aa)) folds into the Kinesin motor domain. 104-111 (GPTGCGKT) is an ATP binding site. Positions 361–388 (IAQYTSIIADLRGEIQRLKCKIDQQAGR) form a coiled coil. Positions 477 to 494 (EERRKESYTKEDSEKDSD) are enriched in basic and acidic residues. Disordered regions lie at residues 477–509 (EERR…EVAS), 665–704 (KITP…GTDS), 718–759 (QVKS…SSEN), and 784–997 (AAQR…LQHN). Residues 506-551 (EVASARENIAALVGEQKKLRKEKLALEQRCRELRARGRRLEETLPR) adopt a coiled-coil conformation. Residues 683–697 (KTLSSEAQRPQNNTL) show a composition bias toward polar residues. A compositionally biased stretch (low complexity) spans 750–759 (INSSPESSEN). Polar residues-rich tracts occupy residues 835-851 (TLQH…STGE) and 950-959 (PNQNTGSGNP).

It belongs to the TRAFAC class myosin-kinesin ATPase superfamily. Kinesin family. Strongly expressed in the oviduct and trachea. Expressed in testis, lung, ovary and brain.

Its subcellular location is the cytoplasm. The protein localises to the cytoskeleton. It is found in the cell projection. It localises to the cilium. Plus end-directed microtubule-dependent motor protein that regulates the length of motile cilia by mediating depolymerization of microtubules at ciliary tips. The protein is Kinesin-like protein KIF19 (Kif19) of Mus musculus (Mouse).